Consider the following 265-residue polypeptide: Probable enoyl-CoA hydratase 1, peroxisomal (265 aa).

At Met-1 the chain carries N-acetylmethionine. Substrate is bound by residues 68–72 (SGVDL) and Ala-112. The short motif at 263-265 (SKL) is the Microbody targeting signal element.

This sequence belongs to the enoyl-CoA hydratase/isomerase family.

The protein resides in the peroxisome. It carries out the reaction a (3S)-3-hydroxyacyl-CoA = a (2E)-enoyl-CoA + H2O. The catalysed reaction is a 4-saturated-(3S)-3-hydroxyacyl-CoA = a (3E)-enoyl-CoA + H2O. It participates in lipid metabolism; fatty acid beta-oxidation. In terms of biological role, straight-chain enoyl-CoA thioesters from C4 up to at least C16 are processed, although with decreasing catalytic rate. This is Probable enoyl-CoA hydratase 1, peroxisomal from Arabidopsis thaliana (Mouse-ear cress).